Consider the following 444-residue polypeptide: MTKTYHFIGIKGSGMSALALMLHQMGHKVQGSDVDKYYFTQRGLEQAGISILPFDEKNIQPDFEIIAGNAFRPDNNVEIAYADANGISYKRYHEFLGSFMRDFVSLGVAGAHGKTSTTGILSHVLSNITDTSYLIGDGTGRGSANAKYFVFESDEYERHFMPYHPEYSIITNIDFDHPDYFTSLEDVFNAFNDYAKQITKGLFIYGEDEQLRRITSNAPIYYYGFKEEGNDFVAHDLLRSTSGSGFKVSFRGQELGEFQIPSFGRHNIMNATAVIGLLYTAGLDLNLVREHLKTFGGVKRRFTEKIVNETVIIDDFAHHPTEIIATLDAARQKYPSKEIVAIFQPHTFTRTIALLDEFAEALNQADSVYLAQIYGSAREVDKGDVKVEDLAEKIVKRAKVIDVDNVSPLLDHDNAVYVFMGAGDIQTYEYSFERLLSNLTSNVQ.

110 to 116 (GAHGKTS) provides a ligand contact to ATP.

Belongs to the MurCDEF family.

It localises to the cytoplasm. The catalysed reaction is UDP-N-acetyl-alpha-D-muramate + L-alanine + ATP = UDP-N-acetyl-alpha-D-muramoyl-L-alanine + ADP + phosphate + H(+). It functions in the pathway cell wall biogenesis; peptidoglycan biosynthesis. Functionally, cell wall formation. The chain is UDP-N-acetylmuramate--L-alanine ligase from Streptococcus sanguinis (strain SK36).